The primary structure comprises 645 residues: Threonine--tRNA ligase (645 aa).

Residues 1–63 form the TGS domain; the sequence is MDQIKIKFPD…ESDGDIEIVT (63 aa). The segment at 242 to 540 is catalytic; the sequence is DHRKIGKELE…LTEETKGAFP (299 aa). 3 residues coordinate Zn(2+): cysteine 336, histidine 387, and histidine 517.

The protein belongs to the class-II aminoacyl-tRNA synthetase family. As to quaternary structure, homodimer. Zn(2+) serves as cofactor.

It localises to the cytoplasm. It carries out the reaction tRNA(Thr) + L-threonine + ATP = L-threonyl-tRNA(Thr) + AMP + diphosphate + H(+). Catalyzes the attachment of threonine to tRNA(Thr) in a two-step reaction: L-threonine is first activated by ATP to form Thr-AMP and then transferred to the acceptor end of tRNA(Thr). Also edits incorrectly charged L-seryl-tRNA(Thr). This Staphylococcus saprophyticus subsp. saprophyticus (strain ATCC 15305 / DSM 20229 / NCIMB 8711 / NCTC 7292 / S-41) protein is Threonine--tRNA ligase.